The chain runs to 292 residues: Bifunctional protein FolD 2 (292 aa).

Residues 166 to 168 and Ile232 contribute to the NADP(+) site; that span reads GHS.

The protein belongs to the tetrahydrofolate dehydrogenase/cyclohydrolase family. In terms of assembly, homodimer.

It carries out the reaction (6R)-5,10-methylene-5,6,7,8-tetrahydrofolate + NADP(+) = (6R)-5,10-methenyltetrahydrofolate + NADPH. The catalysed reaction is (6R)-5,10-methenyltetrahydrofolate + H2O = (6R)-10-formyltetrahydrofolate + H(+). Its pathway is one-carbon metabolism; tetrahydrofolate interconversion. In terms of biological role, catalyzes the oxidation of 5,10-methylenetetrahydrofolate to 5,10-methenyltetrahydrofolate and then the hydrolysis of 5,10-methenyltetrahydrofolate to 10-formyltetrahydrofolate. The protein is Bifunctional protein FolD 2 of Ruegeria pomeroyi (strain ATCC 700808 / DSM 15171 / DSS-3) (Silicibacter pomeroyi).